The sequence spans 238 residues: Dolichyldiphosphatase 1 (238 aa).

The next 4 helical transmembrane spans lie at 33 to 53 (LAYL…LIIF), 100 to 120 (PSSH…FLYL), 130 to 150 (FLDL…AFLV), and 162 to 182 (WSQV…WFII).

It belongs to the dolichyldiphosphatase family. Widely expressed with highest levels in brain, kidney, lung and intestine.

It localises to the endoplasmic reticulum membrane. It carries out the reaction a di-trans,poly-cis-dolichyl diphosphate + H2O = a di-trans,poly-cis-dolichyl phosphate + phosphate + H(+). The protein operates within protein modification; protein glycosylation. In terms of biological role, required for efficient N-glycosylation. Necessary for maintaining optimal levels of dolichol-linked oligosaccharides. Hydrolyzes dolichyl pyrophosphate at a very high rate and dolichyl monophosphate at a much lower rate. Does not act on phosphatidate. This is Dolichyldiphosphatase 1 (Dolpp1) from Mus musculus (Mouse).